We begin with the raw amino-acid sequence, 452 residues long: AP-4 complex subunit mu-1 (452 aa).

The MHD domain maps to K184–R451.

This sequence belongs to the adaptor complexes medium subunit family. In terms of assembly, adaptor protein complex 4 (AP-4) is a heterotetramer composed of two large adaptins (epsilon-type subunit AP4E1 and beta-type subunit AP4B1), a medium adaptin (mu-type subunit AP4M1) and a small adaptin (sigma-type AP4S1). Interacts with tyrosine-based sorting signals on the cytoplasmic tail of cargo proteins such as APP, ATG9A, LAMP2 and NAGPA. Interacts with the C-terminal domain of GRID2. Interacts with GRIA1 and GRIA2; the interaction is indirect via CACNG3. Interacts with CACNG3; CACNG3 associates GRIA1 and GRIA2 with the adaptor protein complex 4 (AP-4) to target them to the somatodendritic compartment of neurons. Interacts with HOOK1 and HOOK2; the interactions are direct, mediate the interaction between FTS-Hook-FHIP (FHF) complex and AP-4 and the perinuclear distribution of AP-4.

The protein resides in the golgi apparatus. The protein localises to the trans-Golgi network membrane. Its subcellular location is the early endosome. Its function is as follows. Component of the adaptor protein complex 4 (AP-4). Adaptor protein complexes are vesicle coat components involved both in vesicle formation and cargo selection. They control the vesicular transport of proteins in different trafficking pathways. AP-4 forms a non clathrin-associated coat on vesicles departing the trans-Golgi network (TGN) and may be involved in the targeting of proteins from the trans-Golgi network (TGN) to the endosomal-lysosomal system. It is also involved in protein sorting to the basolateral membrane in epithelial cells and the proper asymmetric localization of somatodendritic proteins in neurons. Within AP-4, the mu-type subunit AP4M1 is directly involved in the recognition and binding of tyrosine-based sorting signals found in the cytoplasmic part of cargos. The adaptor protein complex 4 (AP-4) may also recognize other types of sorting signal. This is AP-4 complex subunit mu-1 from Canis lupus familiaris (Dog).